The chain runs to 468 residues: Putative proline/betaine transporter (468 aa).

12 helical membrane passes run 20–42, 63–83, 91–111, 115–135, 164–184, 191–211, 246–266, 284–304, 312–332, 336–356, 376–396, and 403–423; these read VFATGIGNAMEWFDFGVYAYTTA, FAALAIAFLLRPIGGIVFGII, VVLTTTIILMALSTLTIGVLP, MIGLWAPALLLLARILQGFST, IGTLSGYIAASIMIALLSFFL, AWGWRIPFILGLFLGLFGLYL, ILVCFVAVVFFNVTNYTVTAY, VLITCVMAVMIPLALFFGKLA, VFLIGTGGLTLLSIVAFSLLN, LPFIILGVFILGFFLSTYEAT, VTFNISVSLFGGTTPLVNSWL, and IYAPAYYLTAISIIGFIVIAV.

This sequence belongs to the major facilitator superfamily. Metabolite:H+ Symporter (MHS) family (TC 2.A.1.6) family.

The protein localises to the cell membrane. Functionally, may be a proton symporter involved in the uptake of osmolytes such as proline and glycine betaine. The chain is Putative proline/betaine transporter (proP) from Staphylococcus haemolyticus (strain JCSC1435).